The sequence spans 351 residues: UDP-3-O-acylglucosamine N-acyltransferase (351 aa).

Histidine 240 acts as the Proton acceptor in catalysis.

It belongs to the transferase hexapeptide repeat family. LpxD subfamily. As to quaternary structure, homotrimer.

The enzyme catalyses a UDP-3-O-[(3R)-3-hydroxyacyl]-alpha-D-glucosamine + a (3R)-hydroxyacyl-[ACP] = a UDP-2-N,3-O-bis[(3R)-3-hydroxyacyl]-alpha-D-glucosamine + holo-[ACP] + H(+). Its pathway is bacterial outer membrane biogenesis; LPS lipid A biosynthesis. Catalyzes the N-acylation of UDP-3-O-acylglucosamine using 3-hydroxyacyl-ACP as the acyl donor. Is involved in the biosynthesis of lipid A, a phosphorylated glycolipid that anchors the lipopolysaccharide to the outer membrane of the cell. The sequence is that of UDP-3-O-acylglucosamine N-acyltransferase from Pseudomonas fluorescens (strain ATCC BAA-477 / NRRL B-23932 / Pf-5).